A 227-amino-acid polypeptide reads, in one-letter code: NAD(P)H-hydrate epimerase (227 aa).

Residues 10–227 (MRALETAAFN…GKIMVQYIGL (218 aa)) form the YjeF N-terminal domain. A (6S)-NADPHX-binding site is contributed by 62–66 (NNGGD). K(+) is bound by residues Asn63 and Asp142. Residues 146 to 152 (GIGLNRP) and Asp176 contribute to the (6S)-NADPHX site. Ser179 is a binding site for K(+).

Belongs to the NnrE/AIBP family. K(+) is required as a cofactor.

The catalysed reaction is (6R)-NADHX = (6S)-NADHX. It catalyses the reaction (6R)-NADPHX = (6S)-NADPHX. Functionally, catalyzes the epimerization of the S- and R-forms of NAD(P)HX, a damaged form of NAD(P)H that is a result of enzymatic or heat-dependent hydration. This is a prerequisite for the S-specific NAD(P)H-hydrate dehydratase to allow the repair of both epimers of NAD(P)HX. The sequence is that of NAD(P)H-hydrate epimerase from Roseobacter litoralis (strain ATCC 49566 / DSM 6996 / JCM 21268 / NBRC 15278 / OCh 149).